The primary structure comprises 332 residues: MKVTFSQLKEAFNQVLLKRGVAAETADACADMFARTTESGVYSHGVNRFPRFIQQLDNGDIIPEAKPQRITSLGAIEQWDAQRSIGNLTAKKMMDRAMELASDHGIGLVALRNANHWMRGGSYGWQAAEKGYIGICWTNSIAVMPPWGAKECRIGTNPLIVAIPSTPITMVDMSMSMFSYGMLEVNRLAGRELPVDGGFDDEGNLTKEPGVIEKNRRILPMGYWKGSGLSIVLDMIATLLSNGSSVAEVTQENSDEYGVSQIFIAIEVDKLIDGATRDAKLQRIMDFITTAERADENVAVRLPGHEFTRLLEENRRDGITVDDSVWAKIQAL.

H44 serves as the catalytic Proton donor. NAD(+) contacts are provided by residues 168–174, 224–225, and 304–306; these read ITMVDMS, WK, and GHE.

Belongs to the LDH2/MDH2 oxidoreductase family. DlgD subfamily. Homodimer.

It is found in the cytoplasm. It carries out the reaction 3-dehydro-L-gulonate + NAD(+) = 2,3-dioxo-L-gulonate + NADH + H(+). It catalyses the reaction 3-dehydro-L-gulonate + NADP(+) = 2,3-dioxo-L-gulonate + NADPH + H(+). Its function is as follows. Catalyzes the reduction of 2,3-diketo-L-gulonate in the presence of NADH, to form 3-keto-L-gulonate. This Klebsiella pneumoniae (strain 342) protein is 2,3-diketo-L-gulonate reductase.